Here is a 140-residue protein sequence, read N- to C-terminus: FlaA locus uncharacterized protein YlxG (140 aa).

Residues 1 to 21 (MTSISSEYKLPEKTNTVSTNN) are disordered.

It belongs to the FlgD family.

The chain is FlaA locus uncharacterized protein YlxG (ylxG) from Bacillus subtilis (strain 168).